Here is a 302-residue protein sequence, read N- to C-terminus: Sulfate adenylyltransferase subunit 2 (302 aa).

This sequence belongs to the PAPS reductase family. CysD subfamily. In terms of assembly, heterodimer composed of CysD, the smaller subunit, and CysN.

It catalyses the reaction sulfate + ATP + H(+) = adenosine 5'-phosphosulfate + diphosphate. The protein operates within sulfur metabolism; hydrogen sulfide biosynthesis; sulfite from sulfate: step 1/3. Its function is as follows. With CysN forms the ATP sulfurylase (ATPS) that catalyzes the adenylation of sulfate producing adenosine 5'-phosphosulfate (APS) and diphosphate, the first enzymatic step in sulfur assimilation pathway. APS synthesis involves the formation of a high-energy phosphoric-sulfuric acid anhydride bond driven by GTP hydrolysis by CysN coupled to ATP hydrolysis by CysD. This is Sulfate adenylyltransferase subunit 2 from Psychromonas ingrahamii (strain DSM 17664 / CCUG 51855 / 37).